Reading from the N-terminus, the 199-residue chain is N-(5'-phosphoribosyl)anthranilate isomerase (199 aa).

This sequence belongs to the TrpF family.

The catalysed reaction is N-(5-phospho-beta-D-ribosyl)anthranilate = 1-(2-carboxyphenylamino)-1-deoxy-D-ribulose 5-phosphate. It participates in amino-acid biosynthesis; L-tryptophan biosynthesis; L-tryptophan from chorismate: step 3/5. The sequence is that of N-(5'-phosphoribosyl)anthranilate isomerase from Clostridium kluyveri (strain NBRC 12016).